Consider the following 363-residue polypeptide: 3-isopropylmalate dehydrogenase A (363 aa).

78–89 lines the NAD(+) pocket; that stretch reads GPKWGTGAVRPE. Substrate is bound by residues Arg96, Arg106, Arg135, and Asp222. Asp222, Asp247, and Asp251 together coordinate Mg(2+). 287–299 is a binding site for NAD(+); it reads GSAPDIAGKGIVN.

The protein belongs to the isocitrate and isopropylmalate dehydrogenases family. As to quaternary structure, homodimer. Mg(2+) serves as cofactor. The cofactor is Mn(2+).

The protein localises to the cytoplasm. The catalysed reaction is (2R,3S)-3-isopropylmalate + NAD(+) = 4-methyl-2-oxopentanoate + CO2 + NADH. It functions in the pathway amino-acid biosynthesis; L-leucine biosynthesis; L-leucine from 3-methyl-2-oxobutanoate: step 3/4. In terms of biological role, catalyzes the oxidation of 3-carboxy-2-hydroxy-4-methylpentanoate (3-isopropylmalate) to 3-carboxy-4-methyl-2-oxopentanoate. The product decarboxylates to 4-methyl-2 oxopentanoate. The protein is 3-isopropylmalate dehydrogenase A (leu2A) of Aspergillus niger.